The chain runs to 684 residues: Methionine--tRNA ligase (684 aa).

A 'HIGH' region motif is present at residues 12 to 22 (PYANGSIHLGH). The Zn(2+) site is built by cysteine 143, cysteine 146, cysteine 156, and cysteine 159. Residues 339–343 (KMSKS) carry the 'KMSKS' region motif. Lysine 342 contacts ATP. The tRNA-binding domain maps to 581-684 (DFMKIDMRVA…AGAQPGDKVG (104 aa)).

This sequence belongs to the class-I aminoacyl-tRNA synthetase family. MetG type 1 subfamily. In terms of assembly, homodimer. Zn(2+) is required as a cofactor.

The protein resides in the cytoplasm. It catalyses the reaction tRNA(Met) + L-methionine + ATP = L-methionyl-tRNA(Met) + AMP + diphosphate. In terms of biological role, is required not only for elongation of protein synthesis but also for the initiation of all mRNA translation through initiator tRNA(fMet) aminoacylation. The protein is Methionine--tRNA ligase of Neisseria gonorrhoeae (strain ATCC 700825 / FA 1090).